A 111-amino-acid polypeptide reads, in one-letter code: COX assembly mitochondrial protein (111 aa).

In terms of domain architecture, CHCH spans 39–82; that stretch reads YKKCANFVQAMADCAKANGMKVFPTCDKQRDEMKSCLLFYQTDE. 2 consecutive short sequence motifs (cx9C motif) follow at residues 42–52 and 64–74; these read CANFVQAMADC and CDKQRDEMKSC. Disulfide bonds link cysteine 42–cysteine 74 and cysteine 52–cysteine 64.

This sequence belongs to the CMC family.

The protein resides in the mitochondrion inner membrane. Its function is as follows. Required for mitochondrial cytochrome c oxidase (COX) assembly and respiration. Binds copper. May be involved in copper trafficking and distribution to mitochondrial COX and SOD1. This Saccharomyces cerevisiae (strain RM11-1a) (Baker's yeast) protein is COX assembly mitochondrial protein (CMC1).